The sequence spans 213 residues: Methylthioribulose-1-phosphate dehydratase (213 aa).

2 residues coordinate Zn(2+): H97 and H99.

This sequence belongs to the aldolase class II family. MtnB subfamily. In terms of assembly, homotetramer. The cofactor is Zn(2+).

The catalysed reaction is 5-(methylsulfanyl)-D-ribulose 1-phosphate = 5-methylsulfanyl-2,3-dioxopentyl phosphate + H2O. The protein operates within amino-acid biosynthesis; L-methionine biosynthesis via salvage pathway; L-methionine from S-methyl-5-thio-alpha-D-ribose 1-phosphate: step 2/6. Catalyzes the dehydration of methylthioribulose-1-phosphate (MTRu-1-P) into 2,3-diketo-5-methylthiopentyl-1-phosphate (DK-MTP-1-P). This Geobacillus sp. (strain WCH70) protein is Methylthioribulose-1-phosphate dehydratase.